Consider the following 189-residue polypeptide: MFDLKYGRPLNFKRWLDDHADKLKPPVGNQQIWQDSDMMVTVVGGPNERSDFHDDPIEELFYQFKGNAYLLLWEDGRYERVDLREGDMLLLPPHTLHSPQRPEADSRCLVVERKRPQGQNDAFQWSCASCGTIVQRHEVTLQSIVADLPPLYEKFYASSEDARRCPGCGEIHPGRDFQAWHRTLARHSS.

Arg-49 serves as a coordination point for O2. Fe cation is bound by residues His-53, Glu-59, and His-97. Glu-59 contributes to the substrate binding site. Substrate contacts are provided by Arg-101 and Glu-112. Residues Cys-127, Cys-130, Cys-165, and Cys-168 each contribute to the Fe cation site.

It belongs to the 3-HAO family. As to quaternary structure, homodimer. It depends on Fe(2+) as a cofactor.

It carries out the reaction 3-hydroxyanthranilate + O2 = (2Z,4Z)-2-amino-3-carboxymuconate 6-semialdehyde. The protein operates within cofactor biosynthesis; NAD(+) biosynthesis; quinolinate from L-kynurenine: step 3/3. Catalyzes the oxidative ring opening of 3-hydroxyanthranilate to 2-amino-3-carboxymuconate semialdehyde, which spontaneously cyclizes to quinolinate. This Cupriavidus pinatubonensis (strain JMP 134 / LMG 1197) (Cupriavidus necator (strain JMP 134)) protein is 3-hydroxyanthranilate 3,4-dioxygenase.